A 274-amino-acid polypeptide reads, in one-letter code: Large ribosomal subunit protein uL2 (274 aa).

Residues 223–274 (VAMNPVDHPHGGGEGRTGEGRHAVDPWGNLTKGYRTRNNKRTQSMIVSRRKK) form a disordered region. Residues 229 to 246 (DHPHGGGEGRTGEGRHAV) are compositionally biased toward basic and acidic residues.

Belongs to the universal ribosomal protein uL2 family. In terms of assembly, part of the 50S ribosomal subunit. Forms a bridge to the 30S subunit in the 70S ribosome.

Its function is as follows. One of the primary rRNA binding proteins. Required for association of the 30S and 50S subunits to form the 70S ribosome, for tRNA binding and peptide bond formation. It has been suggested to have peptidyltransferase activity; this is somewhat controversial. Makes several contacts with the 16S rRNA in the 70S ribosome. The protein is Large ribosomal subunit protein uL2 of Verminephrobacter eiseniae (strain EF01-2).